We begin with the raw amino-acid sequence, 235 residues long: CMP-N,N'-diacetyllegionaminic acid synthase (235 aa).

Belongs to the CMP-NeuNAc synthase family.

It carries out the reaction N,N-diacetyllegionaminate + CTP = CMP-N,N-diacetyllegionaminate + diphosphate. Functionally, involved in biosynthesis of legionaminic acid (5,7-diamino-3,5,7,9-tetradeoxy-D-glycero-D-galacto-non-2-ulosonic acid)(Leg), a sialic acid-like derivative that is incorporated into flagellin via O-linkage to Ser/Thr. Catalyzes the conversion of N,N'-diacetyllegionaminic acid (Leg5Ac7Ac) and CTP into CMP-N,N'-diacetyllegionaminic acid (CMP-Leg5Ac7Ac). The chain is CMP-N,N'-diacetyllegionaminic acid synthase (legF) from Campylobacter jejuni subsp. jejuni serotype O:2 (strain ATCC 700819 / NCTC 11168).